The following is a 101-amino-acid chain: Urease subunit beta (101 aa).

The protein belongs to the urease beta subunit family. Heterotrimer of UreA (gamma), UreB (beta) and UreC (alpha) subunits. Three heterotrimers associate to form the active enzyme.

It is found in the cytoplasm. It catalyses the reaction urea + 2 H2O + H(+) = hydrogencarbonate + 2 NH4(+). The protein operates within nitrogen metabolism; urea degradation; CO(2) and NH(3) from urea (urease route): step 1/1. This is Urease subunit beta from Rhizobium meliloti (strain 1021) (Ensifer meliloti).